The chain runs to 151 residues: Small ribosomal subunit protein uS15 (151 aa).

2 positions are modified to phosphoserine: serine 21 and serine 32.

It belongs to the universal ribosomal protein uS15 family. As to quaternary structure, component of the small ribosomal subunit (SSU). Mature yeast ribosomes consist of a small (40S) and a large (60S) subunit. The 40S small subunit contains 1 molecule of ribosomal RNA (18S rRNA) and at least 33 different proteins. The large 60S subunit contains 3 rRNA molecules (25S, 5.8S and 5S rRNA) and at least 46 different proteins.

It localises to the cytoplasm. In terms of biological role, component of the ribosome, a large ribonucleoprotein complex responsible for the synthesis of proteins in the cell. The small ribosomal subunit (SSU) binds messenger RNAs (mRNAs) and translates the encoded message by selecting cognate aminoacyl-transfer RNA (tRNA) molecules. The large subunit (LSU) contains the ribosomal catalytic site termed the peptidyl transferase center (PTC), which catalyzes the formation of peptide bonds, thereby polymerizing the amino acids delivered by tRNAs into a polypeptide chain. The nascent polypeptides leave the ribosome through a tunnel in the LSU and interact with protein factors that function in enzymatic processing, targeting, and the membrane insertion of nascent chains at the exit of the ribosomal tunnel. The sequence is that of Small ribosomal subunit protein uS15 (rps13) from Schizosaccharomyces pombe (strain 972 / ATCC 24843) (Fission yeast).